The following is a 347-amino-acid chain: MNTPDPWSSPEVQFCFAAANSSCPRKARPALVVCAMYLIMIGAIVMTMLGNMAVIISIAHFKQLHSPTNFLILSMATTDFLLSCVVMPFSMIRSIESCWYFGDLFCKVHSCCDIMLCTTSIFHLCFISVDRHYAVCDPLHYVTQITTRVVGVFLLISWSVPIFFAFGLVFSELNLIGAEDFVAAIDCTGLCVLIFNKLWGVLASFIAFFLPGTVMVGIYIHIFTVAQKHARQIGTGPRTKQALSESKMKATSKKESKATKTLSIVMGVFVLCWLPFFVLTITDPFIDFTTPEDLYNVFLWLGYFNSTFNPIIYGMFYPWFRKALRMIVTGTIFRSDSSTSSLHPAHP.

The Extracellular portion of the chain corresponds to 1-37; the sequence is MNTPDPWSSPEVQFCFAAANSSCPRKARPALVVCAMY. N-linked (GlcNAc...) asparagine glycosylation occurs at N20. Cystine bridges form between C23–C187 and C106–C191. The chain crosses the membrane as a helical span at residues 38–58; the sequence is LIMIGAIVMTMLGNMAVIISI. The Cytoplasmic portion of the chain corresponds to 59 to 69; that stretch reads AHFKQLHSPTN. A helical membrane pass occupies residues 70-90; it reads FLILSMATTDFLLSCVVMPFS. Residues 91–110 are Extracellular-facing; it reads MIRSIESCWYFGDLFCKVHS. A helical membrane pass occupies residues 111–129; the sequence is CCDIMLCTTSIFHLCFISV. At 130-149 the chain is on the cytoplasmic side; the sequence is DRHYAVCDPLHYVTQITTRV. Residues 150–170 form a helical membrane-spanning segment; sequence VGVFLLISWSVPIFFAFGLVF. Residues 171–197 lie on the Extracellular side of the membrane; the sequence is SELNLIGAEDFVAAIDCTGLCVLIFNK. Residues 175 to 188 are extracellular Loop 2 (ECL2); it reads LIGAEDFVAAIDCT. The helical transmembrane segment at 198–218 threads the bilayer; that stretch reads LWGVLASFIAFFLPGTVMVGI. Topologically, residues 219 to 260 are cytoplasmic; that stretch reads YIHIFTVAQKHARQIGTGPRTKQALSESKMKATSKKESKATK. Residues 261 to 281 form a helical membrane-spanning segment; it reads TLSIVMGVFVLCWLPFFVLTI. Topologically, residues 282-296 are extracellular; that stretch reads TDPFIDFTTPEDLYN. A helical transmembrane segment spans residues 297–317; sequence VFLWLGYFNSTFNPIIYGMFY. Residues 318 to 347 are Cytoplasmic-facing; the sequence is PWFRKALRMIVTGTIFRSDSSTSSLHPAHP.

This sequence belongs to the G-protein coupled receptor 1 family. As to expression, specifically expressed in neurons of the olfactory epithelium, to discrete glomeruli predominantly localized to a confined bulb region. Present in the dorsal area of the main olfactory epithelium.

It localises to the cell membrane. Functionally, olfactory receptor specific for 2-phenylethylamine, a trace amine present at high concentration in the urine of carnivore species, playing a key role in fear and avoidance responses. 2-phenylethylamine acts as a kairomone in the chemical detection of carnivore odor and triggers fear in mice. This receptor is probably mediated by the G(s)-class of G-proteins which activate adenylate cyclase. This is Trace amine-associated receptor 4 from Mus musculus (Mouse).